Here is a 400-residue protein sequence, read N- to C-terminus: MIIKPRVRGFICVTTHPVGCEANVKEQIDYVTSHGPIANGPKKVLVIGASTGYGLAARISAAFGSGADTLGVFFERAGSETKPGTAGWYNSAAFEKFAAEKGLYARSINGDAFSDKVKQVTIDTIKQDLGKVDLVVYSLAAPRRTHPKTGETISSTLKPVGKAVTFRGLDTDKEVIREVSLEPATQEEIDGTVAVMGGEDWQMWIDALDEAGVLADGAKTTAFTYLGEQITHDIYWNGSIGEAKKDLDKKVLSIRDKLAAHGGDARVSVLKAVVTQASSAIPMMPLYLSLLFKVMKEQGTHEGCIEQVYGLLKDSLYGATPHVDEEGRLRADYKELDPQVQGKVVAMWDKVTNENLYEMTDFAGYKTEFLRLFGFEIAGVDYDADVNPDVKIPGIIDTTV.

NAD(+)-binding positions include 48 to 53 (GASTGY), 74 to 75 (FE), 111 to 112 (DA), and 139 to 140 (LA). A substrate-binding site is contributed by Y225. Catalysis depends on Y235, which acts as the Proton donor. Residues K244 and 273 to 275 (VVT) each bind NAD(+).

It belongs to the TER reductase family. Monomer.

The catalysed reaction is a 2,3-saturated acyl-[ACP] + NAD(+) = a (2E)-enoyl-[ACP] + NADH + H(+). It functions in the pathway lipid metabolism; fatty acid biosynthesis. Involved in the final reduction of the elongation cycle of fatty acid synthesis (FAS II). Catalyzes the reduction of a carbon-carbon double bond in an enoyl moiety that is covalently linked to an acyl carrier protein (ACP). In Burkholderia ambifaria (strain ATCC BAA-244 / DSM 16087 / CCUG 44356 / LMG 19182 / AMMD) (Burkholderia cepacia (strain AMMD)), this protein is Enoyl-[acyl-carrier-protein] reductase [NADH].